Reading from the N-terminus, the 357-residue chain is GTPase Obg (357 aa).

The Obg domain occupies 1-159; the sequence is MKFVDEAFID…KSLKLELKVL (159 aa). The 175-residue stretch at 160–334 folds into the OBG-type G domain; the sequence is ADVGLLGMPN…LVQSIFQHVH (175 aa). GTP is bound by residues 166–173, 191–195, 213–216, 284–287, and 315–317; these read GMPNAGKS, FTTLH, DIPG, NKLD, and SAL. Residues Ser-173 and Thr-193 each coordinate Mg(2+).

This sequence belongs to the TRAFAC class OBG-HflX-like GTPase superfamily. OBG GTPase family. Monomer. The cofactor is Mg(2+).

The protein localises to the cytoplasm. Functionally, an essential GTPase which binds GTP, GDP and possibly (p)ppGpp with moderate affinity, with high nucleotide exchange rates and a fairly low GTP hydrolysis rate. Plays a role in control of the cell cycle, stress response, ribosome biogenesis and in those bacteria that undergo differentiation, in morphogenesis control. This is GTPase Obg from Acidovorax sp. (strain JS42).